The primary structure comprises 257 residues: 7-carboxy-7-deazaguanine synthase (257 aa).

The interval 1-25 (MKSVDHPVDVLPAEHSAETPGDARA) is disordered. Residues 39–41 (RQG) and arginine 54 each bind substrate. The Radical SAM core domain maps to 45–244 (LTGTESVFIR…AISRGYQYCD (200 aa)). [4Fe-4S] cluster-binding residues include cysteine 58, cysteine 62, and cysteine 65. Position 67 (threonine 67) interacts with Mg(2+). Threonine 99 serves as a coordination point for substrate. S-adenosyl-L-methionine-binding positions include glycine 101 and 143–145 (SPK).

The protein belongs to the radical SAM superfamily. 7-carboxy-7-deazaguanine synthase family. Homodimer. The cofactor is [4Fe-4S] cluster. S-adenosyl-L-methionine is required as a cofactor. Requires Mg(2+) as cofactor.

The enzyme catalyses 6-carboxy-5,6,7,8-tetrahydropterin + H(+) = 7-carboxy-7-deazaguanine + NH4(+). Its pathway is purine metabolism; 7-cyano-7-deazaguanine biosynthesis. Its function is as follows. Catalyzes the complex heterocyclic radical-mediated conversion of 6-carboxy-5,6,7,8-tetrahydropterin (CPH4) to 7-carboxy-7-deazaguanine (CDG), a step common to the biosynthetic pathways of all 7-deazapurine-containing compounds. In Rhodopirellula baltica (strain DSM 10527 / NCIMB 13988 / SH1), this protein is 7-carboxy-7-deazaguanine synthase.